The primary structure comprises 333 residues: GTPase Obg (333 aa).

Positions 1–159 (MKFIDQTIIQ…RDIQLELILI (159 aa)) constitute an Obg domain. One can recognise an OBG-type G domain in the interval 160-332 (ADVGTLGMPN…LCSDIAFYLQ (173 aa)). GTP contacts are provided by residues 166–173 (GMPNAGKS), 191–195 (FTTLN), 212–215 (DIPG), 282–285 (NKID), and 313–315 (SSI). Residues Ser-173 and Thr-193 each coordinate Mg(2+).

It belongs to the TRAFAC class OBG-HflX-like GTPase superfamily. OBG GTPase family. Monomer. The cofactor is Mg(2+).

It localises to the cytoplasm. In terms of biological role, an essential GTPase which binds GTP, GDP and possibly (p)ppGpp with moderate affinity, with high nucleotide exchange rates and a fairly low GTP hydrolysis rate. Plays a role in control of the cell cycle, stress response, ribosome biogenesis and in those bacteria that undergo differentiation, in morphogenesis control. This Buchnera aphidicola subsp. Schizaphis graminum (strain Sg) protein is GTPase Obg.